A 339-amino-acid chain; its full sequence is Ketol-acid reductoisomerase (NADP(+)) (339 aa).

One can recognise a KARI N-terminal Rossmann domain in the interval 1–182 (MRVYYDRDAD…GGGRAGIIET (182 aa)). Residues 24 to 27 (YGSQ), Arg-48, Ser-51, and 83 to 86 (DEGQ) each bind NADP(+). His-108 is a catalytic residue. Residue Gly-134 coordinates NADP(+). The KARI C-terminal knotted domain occupies 183–328 (SFKEEVETDL…EKLRGMMPWI (146 aa)). 4 residues coordinate Mg(2+): Asp-191, Glu-195, Glu-227, and Glu-231. Substrate is bound at residue Ser-252.

The protein belongs to the ketol-acid reductoisomerase family. Mg(2+) serves as cofactor.

The catalysed reaction is (2R)-2,3-dihydroxy-3-methylbutanoate + NADP(+) = (2S)-2-acetolactate + NADPH + H(+). The enzyme catalyses (2R,3R)-2,3-dihydroxy-3-methylpentanoate + NADP(+) = (S)-2-ethyl-2-hydroxy-3-oxobutanoate + NADPH + H(+). The protein operates within amino-acid biosynthesis; L-isoleucine biosynthesis; L-isoleucine from 2-oxobutanoate: step 2/4. It functions in the pathway amino-acid biosynthesis; L-valine biosynthesis; L-valine from pyruvate: step 2/4. In terms of biological role, involved in the biosynthesis of branched-chain amino acids (BCAA). Catalyzes an alkyl-migration followed by a ketol-acid reduction of (S)-2-acetolactate (S2AL) to yield (R)-2,3-dihydroxy-isovalerate. In the isomerase reaction, S2AL is rearranged via a Mg-dependent methyl migration to produce 3-hydroxy-3-methyl-2-ketobutyrate (HMKB). In the reductase reaction, this 2-ketoacid undergoes a metal-dependent reduction by NADPH to yield (R)-2,3-dihydroxy-isovalerate. This Gluconacetobacter diazotrophicus (strain ATCC 49037 / DSM 5601 / CCUG 37298 / CIP 103539 / LMG 7603 / PAl5) protein is Ketol-acid reductoisomerase (NADP(+)).